Reading from the N-terminus, the 329-residue chain is Phenylalanine--tRNA ligase alpha subunit (329 aa).

A Mg(2+)-binding site is contributed by glutamate 253.

It belongs to the class-II aminoacyl-tRNA synthetase family. Phe-tRNA synthetase alpha subunit type 1 subfamily. In terms of assembly, tetramer of two alpha and two beta subunits. The cofactor is Mg(2+).

The protein resides in the cytoplasm. The catalysed reaction is tRNA(Phe) + L-phenylalanine + ATP = L-phenylalanyl-tRNA(Phe) + AMP + diphosphate + H(+). This chain is Phenylalanine--tRNA ligase alpha subunit, found in Teredinibacter turnerae (strain ATCC 39867 / T7901).